The following is a 307-amino-acid chain: MELLFLGTGAGIPAKARNVTSVALKLLEERRSVWLFDCGEATQHQILHTTIKPRKIEKIFITHMHGDHVYGLPGLLGSRSFQGGEDELTVYGPKGIKAFIETSLAVTKTHLTYPLAIQEIEEGIVFEDDQFIVTAVSVIHGVEAFGYRVQEKDVPGSLKADVLKEMNIPPGPVYQKIKKGETVTLEDGRIINGNDFLEPPKKGRSVVFSGDTRVSDKLKELARDCDVLVHEATFAKEDRKLAYDYYHSTTEQAAVTAKEARAKQLILTHISARYQGDASLELQKEAVDVFPNSVAAYDFLEVNVPRG.

Zn(2+) is bound by residues His-63, His-65, Asp-67, His-68, His-140, Asp-211, and His-269. The active-site Proton acceptor is the Asp-67.

Belongs to the RNase Z family. In terms of assembly, homodimer. Requires Zn(2+) as cofactor.

It catalyses the reaction Endonucleolytic cleavage of RNA, removing extra 3' nucleotides from tRNA precursor, generating 3' termini of tRNAs. A 3'-hydroxy group is left at the tRNA terminus and a 5'-phosphoryl group is left at the trailer molecule.. Its function is as follows. Zinc phosphodiesterase, which displays some tRNA 3'-processing endonuclease activity. Probably involved in tRNA maturation, by removing a 3'-trailer from precursor tRNA. The polypeptide is Ribonuclease Z (Bacillus subtilis (strain 168)).